The chain runs to 210 residues: uncharacterized protein (210 aa).

5 positions are modified to phosphoserine: Ser18, Ser39, Ser41, Ser57, and Ser60. Residues Leu33–Ala46 show a composition bias toward polar residues. The tract at residues Leu33 to Gly58 is disordered. 2 disordered regions span residues Tyr100–Ser139 and Asp177–Thr210. Polar residues predominate over residues His102–Met116. Residues Asn130–Ser139 are compositionally biased toward basic and acidic residues. Phosphoserine is present on residues Ser178, Ser189, and Ser192. Residues His191–Thr210 are compositionally biased toward polar residues.

This is an uncharacterized protein from Saccharomyces cerevisiae (strain ATCC 204508 / S288c) (Baker's yeast).